The sequence spans 373 residues: Putative glutamate--cysteine ligase 2-1 (373 aa).

The protein belongs to the glutamate--cysteine ligase type 2 family. YbdK subfamily.

The enzyme catalyses L-cysteine + L-glutamate + ATP = gamma-L-glutamyl-L-cysteine + ADP + phosphate + H(+). In terms of biological role, ATP-dependent carboxylate-amine ligase which exhibits weak glutamate--cysteine ligase activity. In Legionella pneumophila (strain Lens), this protein is Putative glutamate--cysteine ligase 2-1.